The primary structure comprises 122 residues: Large ribosomal subunit protein uL14 (122 aa).

This sequence belongs to the universal ribosomal protein uL14 family. Part of the 50S ribosomal subunit. Forms a cluster with proteins L3 and L19. In the 70S ribosome, L14 and L19 interact and together make contacts with the 16S rRNA in bridges B5 and B8.

Functionally, binds to 23S rRNA. Forms part of two intersubunit bridges in the 70S ribosome. The protein is Large ribosomal subunit protein uL14 of Herminiimonas arsenicoxydans.